Here is a 405-residue protein sequence, read N- to C-terminus: uncharacterized protein (405 aa).

Helical transmembrane passes span 9–29, 41–61, 74–94, 98–118, 138–158, 168–190, 227–247, 252–272, 291–311, and 373–393; these read VFAL…VTIV, VFLA…ASFC, VLAG…YSVT, QAFF…GAFF, ANGV…GLGG, LVVG…LHVN, ALAG…AVLH, WWGM…VIAI, LVMS…LCAL, and IAFI…LAQP.

This sequence belongs to the major facilitator superfamily. Drug:H(+) antiporter-3 (DHA3) (TC 2.A.1.21) family.

The protein localises to the cell membrane. This is an uncharacterized protein from Bacillus subtilis (strain 168).